The sequence spans 495 residues: Glucokinase (495 aa).

One can recognise a Hexokinase domain in the interval Ser3 to Leu483. The tract at residues Asn57–Val206 is hexokinase small subdomain. Lys93 is a binding site for ATP. The glucose-binding stretch occupies residues Asp149–Phe175. Residues Asn207–Asp472 are hexokinase large subdomain. Asp472–Gly477 contacts ATP.

This sequence belongs to the hexokinase family. In terms of assembly, monomer.

The catalysed reaction is D-glucose + ATP = D-glucose 6-phosphate + ADP + H(+). The enzyme catalyses a D-hexose + ATP = a D-hexose 6-phosphate + ADP + H(+). It carries out the reaction D-mannose + ATP = D-mannose 6-phosphate + ADP + H(+). It catalyses the reaction D-glucosamine + ATP = D-glucosamine 6-phosphate + ADP + H(+). The protein operates within carbohydrate metabolism; hexose metabolism. Its pathway is carbohydrate degradation; glycolysis; D-glyceraldehyde 3-phosphate and glycerone phosphate from D-glucose: step 1/4. The enzyme has great affinity for glucose. Mannose, 2-deoxyglucose and glucosamine can serve as substrates. In Aspergillus niger, this protein is Glucokinase (glkA).